A 109-amino-acid polypeptide reads, in one-letter code: uncharacterized protein (109 aa).

The disordered stretch occupies residues 77–98 (TRTGHAYPRFTRPSFPSCNRNG).

This is an uncharacterized protein from Homo sapiens (Human).